We begin with the raw amino-acid sequence, 856 residues long: V-type proton ATPase subunit a (856 aa).

Over 1–409 (MAPKQDTPFR…NAYGTATYQE (409 aa)) the chain is Cytoplasmic. A helical membrane pass occupies residues 410–428 (VNPAIPVIVTFPFLFAVMF). Over 429 to 430 (GD) the chain is Vacuolar. A helical transmembrane segment spans residues 431-447 (FGHALIMLCAALAMIYW). Over 448–460 (EKPLKKVTFELFA) the chain is Cytoplasmic. A helical membrane pass occupies residues 461-490 (MVFYGRYIVLVMAVFSVYTGLIYNDVFSKS). Topologically, residues 491–544 (MTLFDSQWKWVVPENFKEGMTVKAVLREPNGYRYPFGLDWRWHGTENELLFINS) are vacuolar. Residues 545–564 (YKMKMAIILGWAHMTYSLCF) traverse the membrane as a helical segment. Topologically, residues 565–582 (SYINARHFKRPIDIWGNF) are cytoplasmic. Residues 583–603 (VPGMIFFQSIFGYLVLCIIYK) traverse the membrane as a helical segment. Residues 604–648 (WSVDWFGTGRQPPGLLNMLIYMFLQPGTLDGGVELYPGQATVQVI) are Vacuolar-facing. Residues 649-668 (LLLLAVIQVPILLFLKPFYL) form a helical membrane-spanning segment. Over 669–738 (RWENNRARAK…EVMIHQVIHT (70 aa)) the chain is Cytoplasmic. The interval 689–710 (VSALDEDDEEDPSNGDDYEGAA) is disordered. Positions 692 to 707 (LDEDDEEDPSNGDDYE) are enriched in acidic residues. Residues 739–763 (IEFCLNSVSHTASYLRLWALSLAHQ) form a helical membrane-spanning segment. Over 764–784 (QLSAVLWSMTMAKALESKGLG) the chain is Vacuolar. The helical transmembrane segment at 785 to 823 (GAIFLVVAFAMFFVLSVIILIIMEGVSAMLHSLRLAWVE) threads the bilayer. The Cytoplasmic segment spans residues 824 to 856 (SFSKFAEFGGWPFTPFSFKQQLEESEELKEYIG).

It belongs to the V-ATPase 116 kDa subunit family. As to quaternary structure, V-ATPase is a heteromultimeric enzyme composed of a peripheral catalytic V1 complex (components A to H) attached to an integral membrane V0 proton pore complex (components: a, c, c', c'', d, e, f and VOA1).

The protein localises to the vacuole membrane. Its function is as follows. Subunit of the V0 complex of vacuolar(H+)-ATPase (V-ATPase), a multisubunit enzyme composed of a peripheral complex (V1) that hydrolyzes ATP and a membrane integral complex (V0) that translocates protons. V-ATPase is responsible for acidifying and maintaining the pH of intracellular compartments. The polypeptide is V-type proton ATPase subunit a (vph-1) (Neurospora crassa (strain ATCC 24698 / 74-OR23-1A / CBS 708.71 / DSM 1257 / FGSC 987)).